The primary structure comprises 348 residues: Selenide, water dikinase (348 aa).

The active site involves cysteine 17. Residues lysine 20 and 47–49 (THD) contribute to the ATP site. Residue aspartate 50 coordinates Mg(2+). ATP is bound by residues aspartate 67, aspartate 90, and 138-140 (GHT). Mg(2+) is bound at residue aspartate 90. Aspartate 226 is a Mg(2+) binding site.

The protein belongs to the selenophosphate synthase 1 family. Class I subfamily. Homodimer. Mg(2+) is required as a cofactor.

The catalysed reaction is hydrogenselenide + ATP + H2O = selenophosphate + AMP + phosphate + 2 H(+). Functionally, synthesizes selenophosphate from selenide and ATP. This is Selenide, water dikinase from Porphyromonas gingivalis (strain ATCC BAA-308 / W83).